Consider the following 587-residue polypeptide: Tyrosine-protein kinase transforming protein Src (587 aa).

Residues 1–58 form a disordered region; the sequence is MGSSKSKPKDPSQRRRSLEPPDSTHHGGFPASQTPNKTAAPDTHRTPSRSFGTVATEP. Residue glycine 2 is the site of N-myristoyl glycine; by host attachment. Residues 7–25 are compositionally biased toward basic and acidic residues; that stretch reads KPKDPSQRRRSLEPPDSTH. The 62-residue stretch at 81–142 folds into the SH3 domain; the sequence is GGVTTFVALY…PSNYVAPSDS (62 aa). The 98-residue stretch at 148–245 folds into the SH2 domain; it reads WYFGKITRRE…GLCHRLTNVC (98 aa). The region spanning 267–520 is the Protein kinase domain; sequence LRLEVKLGQG…YLQAFLEDYF (254 aa). ATP contacts are provided by residues 273-281 and lysine 295; that span reads LGQGCFGEV. Aspartate 386 serves as the catalytic Proton acceptor. Position 416 is a phosphotyrosine; by autocatalysis (tyrosine 416).

It belongs to the protein kinase superfamily. Tyr protein kinase family. SRC subfamily. Post-translationally, the phosphorylated form is termed pp60v-src.

The catalysed reaction is L-tyrosyl-[protein] + ATP = O-phospho-L-tyrosyl-[protein] + ADP + H(+). Functionally, this phosphoprotein, required for both the initiation and the maintenance of neoplastic transformation, is a protein kinase that catalyzes the phosphorylation of tyrosine residues in vitro. The polypeptide is Tyrosine-protein kinase transforming protein Src (V-SRC) (Galliformes).